Here is a 295-residue protein sequence, read N- to C-terminus: Phosphoribosylaminoimidazole-succinocarboxamide synthase (295 aa).

This sequence belongs to the SAICAR synthetase family.

It catalyses the reaction 5-amino-1-(5-phospho-D-ribosyl)imidazole-4-carboxylate + L-aspartate + ATP = (2S)-2-[5-amino-1-(5-phospho-beta-D-ribosyl)imidazole-4-carboxamido]succinate + ADP + phosphate + 2 H(+). It functions in the pathway purine metabolism; IMP biosynthesis via de novo pathway; 5-amino-1-(5-phospho-D-ribosyl)imidazole-4-carboxamide from 5-amino-1-(5-phospho-D-ribosyl)imidazole-4-carboxylate: step 1/2. This is Phosphoribosylaminoimidazole-succinocarboxamide synthase from Halorhodospira halophila (strain DSM 244 / SL1) (Ectothiorhodospira halophila (strain DSM 244 / SL1)).